Reading from the N-terminus, the 129-residue chain is Small ribosomal subunit protein uS11 (129 aa).

This sequence belongs to the universal ribosomal protein uS11 family. As to quaternary structure, part of the 30S ribosomal subunit. Interacts with proteins S7 and S18. Binds to IF-3.

Located on the platform of the 30S subunit, it bridges several disparate RNA helices of the 16S rRNA. Forms part of the Shine-Dalgarno cleft in the 70S ribosome. This is Small ribosomal subunit protein uS11 from Bartonella quintana (strain Toulouse) (Rochalimaea quintana).